The following is a 386-amino-acid chain: Adiponectin receptor protein 2 (386 aa).

A disordered region spans residues 1–72 (MNEPAKHRLG…ECHDDNSQED (72 aa)). Residues 1 to 147 (MNEPAKHRLG…SIFRIHTETG (147 aa)) are Cytoplasmic-facing. Over residues 15-31 (PEPDIRLRKGHQLDDTR) the composition is skewed to basic and acidic residues. Residues 58–72 (SPEEPECHDDNSQED) show a composition bias toward acidic residues. A helical transmembrane segment spans residues 148 to 168 (NIWTHLLGCVFFLCLGIFYMF). The Extracellular portion of the chain corresponds to 169–181 (RPNISFVAPLQEK). Residues 182-202 (VVFGLFFLGAILCLSFSWLFH) traverse the membrane as a helical segment. H202 provides a ligand contact to Zn(2+). The Cytoplasmic segment spans residues 203-213 (TVYCHSEGVSR). The helical transmembrane segment at 214–234 (LFSKLDYSGIALLIMGSFVPW) threads the bilayer. Over 235–245 (LYYSFYCNPQP) the chain is Extracellular. A helical membrane pass occupies residues 246-266 (CFIYLIVICVLGIAAIIVSQW). Residues 267–273 (DMFATPQ) are Cytoplasmic-facing. The chain crosses the membrane as a helical span at residues 274-294 (YRGVRAGVFVGLGLSGIIPTL). Residues 295 to 309 (HYVISEGFLKAATIG) are Extracellular-facing. Residues 310–330 (QIGWLMLMASLYITGAALYAA) form a helical membrane-spanning segment. Topologically, residues 331–348 (RIPERFFPGKCDIWFHSH) are cytoplasmic. 2 residues coordinate Zn(2+): H348 and H352. A helical transmembrane segment spans residues 349-369 (QLFHIFVVAGAFVHFHGVSNL). Residues 370 to 386 (QEFRFMIGGGCTEEDAL) are Extracellular-facing.

Belongs to the ADIPOR family. As to quaternary structure, may form homooligomers and heterooligomers with ADIPOR1. Interacts with APPL2 (via BAR domain); ADIPOQ dissociates this interaction. Detected in liver and quadriceps muscle (at protein level). Highly expressed in liver. Highly expressed in white adipose tissue, and at intermediate levels in brown adipose tissue. Expressed at intermediate level in heart, kidney, lung and skeletal muscle. Weakly expressed in brain, spleen and testis.

It is found in the cell membrane. Receptor for ADIPOQ, an essential hormone secreted by adipocytes that regulates glucose and lipid metabolism. Required for normal body fat and glucose homeostasis. ADIPOQ-binding activates a signaling cascade that leads to increased PPARA activity, and ultimately to increased fatty acid oxidation and glucose uptake. Has intermediate affinity for globular and full-length adiponectin. Required for normal revascularization after chronic ischemia caused by severing of blood vessels. The sequence is that of Adiponectin receptor protein 2 from Mus musculus (Mouse).